The sequence spans 72 residues: Protein P13 (72 aa).

The protein resides in the virion membrane. This chain is Protein P13 (P13), found in Pseudomonas phage phi6 (Bacteriophage phi-6).